The sequence spans 308 residues: Probable manganese-dependent inorganic pyrophosphatase (308 aa).

Residues His9, Asp13, Asp15, Asp75, His97, and Asp149 each contribute to the Mn(2+) site.

This sequence belongs to the PPase class C family. It depends on Mn(2+) as a cofactor.

It localises to the cytoplasm. It catalyses the reaction diphosphate + H2O = 2 phosphate + H(+). In Staphylococcus carnosus (strain TM300), this protein is Probable manganese-dependent inorganic pyrophosphatase.